The chain runs to 290 residues: Arylamine N-acetyltransferase 1 (290 aa).

Met1 is subject to N-acetylmethionine. Cys68 serves as the catalytic Acyl-thioester intermediate. Residue Ser103 participates in CoA binding. 106-107 contacts substrate; that stretch reads IH. Active-site residues include His107 and Asp122. CoA is bound by residues Tyr208 and Ser287.

The protein belongs to the arylamine N-acetyltransferase family.

It localises to the cytoplasm. The enzyme catalyses an arylamine + acetyl-CoA = an N-acetylarylamine + CoA. Its function is as follows. Participates in the detoxification of a plethora of hydrazine and arylamine drugs. This Mesocricetus auratus (Golden hamster) protein is Arylamine N-acetyltransferase 1 (NAT1).